The following is a 158-amino-acid chain: MDQAKLARLQQSVRIGKGKGTPRRKTKKVHKSSGTDDKKLQTSLKKLNVQPIQAIEEVNMFKEDGNVIHFAAPKVHASVPSNTFAIYGNGEDKELTELVPGILNQLGPDSLASLRKLAESYQSMQKGEGGEDAKKDDDDDDDEIPDLVEGENFESKVE.

Disordered stretches follow at residues 1–40 (MDQAKLARLQQSVRIGKGKGTPRRKTKKVHKSSGTDDKKL) and 119–158 (ESYQSMQKGEGGEDAKKDDDDDDDEIPDLVEGENFESKVE). Over residues 16–31 (GKGKGTPRRKTKKVHK) the composition is skewed to basic residues. The NAC-A/B domain maps to 34–99 (GTDDKKLQTS…GEDKELTELV (66 aa)). Acidic residues predominate over residues 137–152 (DDDDDDEIPDLVEGEN).

This sequence belongs to the NAC-beta family. As to quaternary structure, part of the nascent polypeptide-associated complex (NAC), consisting of EGD2 and EGD1. NAC associates with ribosomes via EGD1.

It localises to the cytoplasm. The protein localises to the nucleus. Component of the nascent polypeptide-associated complex (NAC), a dynamic component of the ribosomal exit tunnel, protecting the emerging polypeptides from interaction with other cytoplasmic proteins to ensure appropriate nascent protein targeting. The NAC complex also promotes mitochondrial protein import by enhancing productive ribosome interactions with the outer mitochondrial membrane and blocks the inappropriate interaction of ribosomes translating non-secretory nascent polypeptides with translocation sites in the membrane of the endoplasmic reticulum. EGD1 may act as a transcription factor that exert a negative effect on the expression of several genes that are transcribed by RNA polymerase II. This is Nascent polypeptide-associated complex subunit beta (EGD1) from Ajellomyces capsulatus (strain NAm1 / WU24) (Darling's disease fungus).